An 801-amino-acid polypeptide reads, in one-letter code: Transferrin receptor protein 2 (801 aa).

Topologically, residues 1-83 (MERLWGLFQR…WAAAGRRAAP (83 aa)) are cytoplasmic. Residues 16–45 (PRSSQTVYQRVEGPRKGHLEEEEEDGEEGA) form a disordered region. Residues 23-26 (YQRV) carry the Endocytosis signal motif. Positions 35–45 (EEEEEDGEEGA) are enriched in acidic residues. A helical; Signal-anchor for type II membrane protein membrane pass occupies residues 84–104 (YLVLTALLIFTGAFLLGYVAF). The Extracellular segment spans residues 105–801 (RGSCQACGDS…GDVWNIDNNF (697 aa)). 4 N-linked (GlcNAc...) asparagine glycosylation sites follow: N240, N339, N540, and N754.

It belongs to the peptidase M28 family. M28B subfamily. As to quaternary structure, homodimer. Predominantly expressed in liver. While the alpha form is also expressed in spleen, lung, muscle, prostate and peripheral blood mononuclear cells, the beta form is expressed in all tissues tested, albeit weakly.

The protein resides in the cell membrane. It is found in the cytoplasm. Mediates cellular uptake of transferrin-bound iron in a non-iron dependent manner. May be involved in iron metabolism, hepatocyte function and erythrocyte differentiation. In Homo sapiens (Human), this protein is Transferrin receptor protein 2 (TFR2).